A 926-amino-acid polypeptide reads, in one-letter code: DNA mismatch repair protein MutS (926 aa).

The segment at 16–40 (VASTPTRRGRPPGSSAARASNGAGS) is disordered. Positions 26 to 40 (PPGSSAARASNGAGS) are enriched in low complexity. 658–665 (GPNMAGKS) contacts ATP.

This sequence belongs to the DNA mismatch repair MutS family.

Its function is as follows. This protein is involved in the repair of mismatches in DNA. It is possible that it carries out the mismatch recognition step. This protein has a weak ATPase activity. In Granulibacter bethesdensis (strain ATCC BAA-1260 / CGDNIH1), this protein is DNA mismatch repair protein MutS.